Reading from the N-terminus, the 326-residue chain is Polycomb complex protein BMI-1 (326 aa).

Residues 18 to 57 (CVLCGGYFIDATTIIECLHSFCKTCIVRYLETSKYCPICD) form an RING-type zinc finger. Residues 81–95 (KLVPGLFKNEMKRRR) carry the Nuclear localization signal motif. The tract at residues 162 to 182 (RYLRCPAAMTVMHLRKFLRSK) is interaction with PHC2. The tract at residues 164–228 (LRCPAAMTVM…GPLPLKYRVR (65 aa)) is interaction with E4F1. The segment at 236–326 (ISHQRDGLTN…VNGSSATSSG (91 aa)) is disordered. Composition is skewed to low complexity over residues 266–278 (PSTS…PSTP), 290–303 (SSTM…PSGN), and 315–326 (SSVNGSSATSSG).

Component of a PRC1-like complex. Identified in a PRC1-like HPRC-H complex with CBX2, CBX4, CBX8, PHC1, PHC2, PHC3 RING1 and RNF2. Interacts with RNF2/RING2. Interacts with RING1. Part of a complex that contains RNF2, UB2D3 and BMI1, where RNF2 and BMI1 form a tight heterodimer, and UB2D3 interacts only with RNF2. The complex composed of RNF2, UB2D3 and BMI1 binds nucleosomes, and has activity only with nucleosomal histone H2A. Interacts with CBX7 and CBX8. Interacts with SPOP. Part of a complex consisting of BMI1, CUL3 and SPOP. Interacts with E4F1. Interacts with PHC2. Interacts with zinc finger protein ZNF277. May be part of a complex including at least ZNF277, BMI1 and RNF2/RING2. May be polyubiquitinated; which does not lead to proteasomal degradation. Monoubiquitinated.

Its subcellular location is the nucleus. It is found in the cytoplasm. In terms of biological role, component of a Polycomb group (PcG) multiprotein PRC1-like complex, a complex class required to maintain the transcriptionally repressive state of many genes, including Hox genes, throughout development. PcG PRC1 complex acts via chromatin remodeling and modification of histones; it mediates monoubiquitination of histone H2A 'Lys-119', rendering chromatin heritably changed in its expressibility. The complex composed of RNF2, UB2D3 and BMI1 binds nucleosomes, and has activity only with nucleosomal histone H2A. In the PRC1-like complex, regulates the E3 ubiquitin-protein ligase activity of RNF2/RING2. The protein is Polycomb complex protein BMI-1 (BMI1) of Bos taurus (Bovine).